The primary structure comprises 509 residues: Proto-oncogene tyrosine-protein kinase LCK (509 aa).

The N-myristoyl glycine moiety is linked to residue Gly-2. The interval Gly-2–Tyr-72 is interactions with CD4 and CD8. 2 S-palmitoyl cysteine lipidation sites follow: Cys-3 and Cys-5. The SH3 domain occupies Leu-61–Ser-121. Lys-99 participates in a covalent cross-link: Glycyl lysine isopeptide (Lys-Gly) (interchain with G-Cter in ubiquitin). Phosphoserine is present on Ser-102. Residues Trp-127–Cys-224 form the SH2 domain. Residues Arg-154–Arg-242 form an interaction with PTPRH region. Thr-159 carries the phosphothreonine modification. A Phosphoserine modification is found at Ser-162. Tyr-192 is subject to Phosphotyrosine. At Ser-194 the chain carries Phosphoserine. Residues Leu-245–Phe-498 form the Protein kinase domain. Residues Leu-251–Val-259 and Lys-273 contribute to the ATP site. A Glycyl lysine isopeptide (Lys-Gly) (interchain with G-Cter in ubiquitin) cross-link involves residue Lys-276. Asp-364 serves as the catalytic Proton acceptor. At Tyr-394 the chain carries Phosphotyrosine; by autocatalysis. Tyr-505 carries the phosphotyrosine; by CSK modification.

The protein belongs to the protein kinase superfamily. Tyr protein kinase family. As to quaternary structure, binds to the cytoplasmic domain of cell surface receptors, such as AXL, CD2, CD4, CD5, CD8, CD44, CD45 and CD122. Also binds to effector molecules, such as PI4K, VAV1, RASA1, FYB1 and to other protein kinases including CDK1, RAF1, ZAP70 and SYK. Binds to phosphatidylinositol 3'-kinase (PI3K) from T-lymphocytes through its SH3 domain and to the tyrosine phosphorylated form of KHDRBS1/p70 through its SH2 domain. Interacts with SQSTM1. Interacts with phosphorylated LIME1. Interacts with CBLB and PTPRH. Interacts with RUNX3. Forms a signaling complex with EPHA1, PTK2B and PI3-KINASE; upon activation by EFNA1 which may regulate T-lymphocytes migration. Associates with ZAP70 and RHOH; these interactions allow LCK-mediated RHOH and CD3 subunit phosphorylations in the presence of functional ZAP70. Interacts with Saimiriine herpesvirus 2 TIP. Interacts with UNC119; this interaction plays a crucial role in activation of LCK. Interacts with CEACAM1 (via cytoplasmic domain); mediates CEACAM1 phosphorylation resulting in PTPN6 recruitment that dephosphorylates TCR stimulation-induced CD247 and ZAP70. Interacts with CD160. Interacts with CD48. In terms of processing, autophosphorylated on Tyr-394, increasing enzymatic activity, this site is dephosphorylated by PTN22. Phosphorylated on Tyr-505 by CSK, decreasing activity. Dephosphorylated by PTPRC/CD45. Dephosphorylation at Tyr-394 by PTPN2 negatively regulates T-cells differentiation. Dephosphorylation at Tyr-394 by DUSP22 negatively regulates T-cell receptor signaling. Myristoylation is required prior to palmitoylation. Post-translationally, palmitoylation regulates association with the plasma membrane and could be mediated by ZDHHC2. In terms of processing, 'Lys-63'-linked ubiquitinated at Lys-99 and Lys-276 by UBR2; this modification is required for autophosphorylation at Tyr-394. Expressed specifically in lymphoid cells.

The protein localises to the cell membrane. The protein resides in the cytoplasm. It localises to the cytosol. The enzyme catalyses L-tyrosyl-[protein] + ATP = O-phospho-L-tyrosyl-[protein] + ADP + H(+). The relative activities of the inhibitory tyrosine-protein kinase CSK and the activating tyrosine-protein phosphatase PTPRC/CD45 determine the level of LCK activity. These interactions allow rapid and efficient activation of LCK in response to TCR stimulation. Its function is as follows. Non-receptor tyrosine-protein kinase that plays an essential role in the selection and maturation of developing T-cells in the thymus and in the function of mature T-cells. Plays a key role in T-cell antigen receptor (TCR)-linked signal transduction pathways. Constitutively associated with the cytoplasmic portions of the CD4 and CD8 surface receptors. Association of the TCR with a peptide antigen-bound MHC complex facilitates the interaction of CD4 and CD8 with MHC class II and class I molecules, respectively, thereby recruiting the associated LCK protein to the vicinity of the TCR/CD3 complex. LCK then phosphorylates tyrosine residues within the immunoreceptor tyrosine-based activation motifs (ITAM) of the cytoplasmic tails of the TCR-gamma chains and CD3 subunits, initiating the TCR/CD3 signaling pathway. Once stimulated, the TCR recruits the tyrosine kinase ZAP70, that becomes phosphorylated and activated by LCK. Following this, a large number of signaling molecules are recruited, ultimately leading to lymphokine production. LCK also contributes to signaling by other receptor molecules. Associates directly with the cytoplasmic tail of CD2, which leads to hyperphosphorylation and activation of LCK. Also plays a role in the IL2 receptor-linked signaling pathway that controls the T-cell proliferative response. Binding of IL2 to its receptor results in increased activity of LCK. Is expressed at all stages of thymocyte development and is required for the regulation of maturation events that are governed by both pre-TCR and mature alpha beta TCR. Phosphorylates other substrates including RUNX3, PTK2B/PYK2, the microtubule-associated protein MAPT, RHOH or TYROBP. This Saimiri sciureus (Common squirrel monkey) protein is Proto-oncogene tyrosine-protein kinase LCK (LCK).